We begin with the raw amino-acid sequence, 84 residues long: U8-theraphotoxin-Hhn1f (84 aa).

A signal peptide spans 1–21 (MKVVLLVCLVWMMAMMELVSC). Intrachain disulfides connect C23–C35, C29–C44, C34–C67, C54–C75, and C69–C81.

This sequence belongs to the AVIT (prokineticin) family. As to expression, expressed by the venom gland.

The protein resides in the secreted. The chain is U8-theraphotoxin-Hhn1f from Cyriopagopus hainanus (Chinese bird spider).